Reading from the N-terminus, the 557-residue chain is Potassium-transporting ATPase potassium-binding subunit (557 aa).

Helical transmembrane passes span 5–25 (GFLL…PLGS), 63–83 (LCAI…MLLG), 132–152 (GLTV…FAFI), 170–190 (LLRI…LFFI), 253–273 (FVQM…FGEV), 283–303 (LLWA…WAEV), 329–349 (VLVS…AVIA), 356–376 (ALGG…FGGV), 379–399 (GLYG…LMIG), 416–436 (LTAL…ALAM), 484–504 (LLAF…MAIA), and 526–546 (LFVG…FIPA).

The protein belongs to the KdpA family. The system is composed of three essential subunits: KdpA, KdpB and KdpC.

The protein localises to the cell inner membrane. Functionally, part of the high-affinity ATP-driven potassium transport (or Kdp) system, which catalyzes the hydrolysis of ATP coupled with the electrogenic transport of potassium into the cytoplasm. This subunit binds the periplasmic potassium ions and delivers the ions to the membrane domain of KdpB through an intramembrane tunnel. This Shigella boydii serotype 4 (strain Sb227) protein is Potassium-transporting ATPase potassium-binding subunit.